Here is a 432-residue protein sequence, read N- to C-terminus: Alcohol acyltransferase 9 (432 aa).

Catalysis depends on proton acceptor residues His-156 and Asp-379.

This sequence belongs to the plant acyltransferase family. As to expression, expressed in fruit.

It carries out the reaction 2-(methylsulfanyl)acetyl-CoA + butan-1-ol = butyl 2-(methylsulfanyl)acetate + CoA. It catalyses the reaction ethanol + acetyl-CoA = ethyl acetate + CoA. The enzyme catalyses butan-1-ol + acetyl-CoA = butyl acetate + CoA. The catalysed reaction is butan-1-ol + propanoyl-CoA = butyl propanoate + CoA. Functionally, involved in the biosynthesis of volatile esters which confer kiwifruit flavor. Alcohol acyl transferase that can use a wide range of alcohols as substrate to produce esters. Exhibits acetyl-CoA:alcohol O-acyltransferase activity. The protein is Alcohol acyltransferase 9 of Actinidia eriantha (Velvet vine).